A 128-amino-acid polypeptide reads, in one-letter code: Large ribosomal subunit protein bL17 (128 aa).

This sequence belongs to the bacterial ribosomal protein bL17 family. As to quaternary structure, part of the 50S ribosomal subunit. Contacts protein L32.

This is Large ribosomal subunit protein bL17 from Hydrogenovibrio crunogenus (strain DSM 25203 / XCL-2) (Thiomicrospira crunogena).